We begin with the raw amino-acid sequence, 258 residues long: Tryptophan synthase alpha chain (258 aa).

Active-site proton acceptor residues include Glu52 and Asp63.

The protein belongs to the TrpA family. As to quaternary structure, tetramer of two alpha and two beta chains.

The enzyme catalyses (1S,2R)-1-C-(indol-3-yl)glycerol 3-phosphate + L-serine = D-glyceraldehyde 3-phosphate + L-tryptophan + H2O. It participates in amino-acid biosynthesis; L-tryptophan biosynthesis; L-tryptophan from chorismate: step 5/5. Functionally, the alpha subunit is responsible for the aldol cleavage of indoleglycerol phosphate to indole and glyceraldehyde 3-phosphate. The sequence is that of Tryptophan synthase alpha chain from Streptococcus pneumoniae (strain Taiwan19F-14).